A 334-amino-acid polypeptide reads, in one-letter code: tRNA N6-adenosine threonylcarbamoyltransferase (334 aa).

2 residues coordinate Fe cation: histidine 107 and histidine 111. Residues 129 to 133 (LVSGG), aspartate 162, glycine 175, and asparagine 269 contribute to the substrate site. Residue aspartate 297 coordinates Fe cation.

Belongs to the KAE1 / TsaD family. Requires Fe(2+) as cofactor.

It is found in the cytoplasm. The catalysed reaction is L-threonylcarbamoyladenylate + adenosine(37) in tRNA = N(6)-L-threonylcarbamoyladenosine(37) in tRNA + AMP + H(+). Functionally, required for the formation of a threonylcarbamoyl group on adenosine at position 37 (t(6)A37) in tRNAs that read codons beginning with adenine. Is involved in the transfer of the threonylcarbamoyl moiety of threonylcarbamoyl-AMP (TC-AMP) to the N6 group of A37, together with TsaE and TsaB. TsaD likely plays a direct catalytic role in this reaction. This chain is tRNA N6-adenosine threonylcarbamoyltransferase, found in Campylobacter concisus (strain 13826).